Consider the following 256-residue polypeptide: Triosephosphate isomerase (256 aa).

A substrate-binding site is contributed by 10 to 12 (NWK). H97 functions as the Electrophile in the catalytic mechanism. The Proton acceptor role is filled by E169. Substrate is bound by residues G175, S214, and 235–236 (GG).

Belongs to the triosephosphate isomerase family. As to quaternary structure, homodimer.

Its subcellular location is the cytoplasm. It catalyses the reaction D-glyceraldehyde 3-phosphate = dihydroxyacetone phosphate. It participates in carbohydrate biosynthesis; gluconeogenesis. Its pathway is carbohydrate degradation; glycolysis; D-glyceraldehyde 3-phosphate from glycerone phosphate: step 1/1. Its function is as follows. Involved in the gluconeogenesis. Catalyzes stereospecifically the conversion of dihydroxyacetone phosphate (DHAP) to D-glyceraldehyde-3-phosphate (G3P). This is Triosephosphate isomerase from Haemophilus ducreyi (strain 35000HP / ATCC 700724).